The primary structure comprises 577 residues: Putative laccase-1 (577 aa).

The N-terminal stretch at 1–28 (MGTAKIPALLWFLLAGLVLALAVNPAHG) is a signal peptide. Plastocyanin-like domains are found at residues 37 to 153 (FITE…PKRG) and 163 to 316 (KEIP…YTDS). 2 N-linked (GlcNAc...) asparagine glycosylation sites follow: Asn42 and Asn83. Positions 87 and 89 each coordinate Cu cation. Asn115 carries N-linked (GlcNAc...) asparagine glycosylation. Cu cation contacts are provided by His132 and His134. N-linked (GlcNAc...) asparagine glycosylation is found at Asn276, Asn304, Asn382, and Asn402. The region spanning 442-561 (DINGGGPLLT…DTMFIVKDGK (120 aa)) is the Plastocyanin-like 3 domain. Positions 478, 481, 483, 540, 541, 542, 546, and 551 each coordinate Cu cation.

Belongs to the multicopper oxidase family. Cu cation is required as a cofactor.

Its subcellular location is the secreted. It localises to the extracellular space. The protein resides in the apoplast. The enzyme catalyses 4 hydroquinone + O2 = 4 benzosemiquinone + 2 H2O. Lignin degradation and detoxification of lignin-derived products. The protein is Putative laccase-1 (LAC1) of Oryza sativa subsp. japonica (Rice).